A 315-amino-acid polypeptide reads, in one-letter code: Probable cell division protein WhiA (315 aa).

The H-T-H motif DNA-binding region spans 280 to 313; that stretch reads SLKELGEMLDPPVGKSGINHRLRKIEKIAEELRT.

It belongs to the WhiA family.

Functionally, involved in cell division and chromosome segregation. The sequence is that of Probable cell division protein WhiA from Clostridium beijerinckii (strain ATCC 51743 / NCIMB 8052) (Clostridium acetobutylicum).